Reading from the N-terminus, the 489-residue chain is N-succinylglutamate 5-semialdehyde dehydrogenase (489 aa).

224–229 serves as a coordination point for NAD(+); it reads GSAKVG. Catalysis depends on residues glutamate 247 and cysteine 281.

This sequence belongs to the aldehyde dehydrogenase family. AstD subfamily.

The catalysed reaction is N-succinyl-L-glutamate 5-semialdehyde + NAD(+) + H2O = N-succinyl-L-glutamate + NADH + 2 H(+). The protein operates within amino-acid degradation; L-arginine degradation via AST pathway; L-glutamate and succinate from L-arginine: step 4/5. Catalyzes the NAD-dependent reduction of succinylglutamate semialdehyde into succinylglutamate. This is N-succinylglutamate 5-semialdehyde dehydrogenase from Chromohalobacter salexigens (strain ATCC BAA-138 / DSM 3043 / CIP 106854 / NCIMB 13768 / 1H11).